Reading from the N-terminus, the 241-residue chain is 2,3-bisphosphoglycerate-dependent phosphoglycerate mutase (241 aa).

Catalysis depends on histidine 12, which acts as the Tele-phosphohistidine intermediate. Substrate-binding positions include 24–25 (SG), arginine 61, 117–120 (ERYY), and lysine 128. The Proton donor/acceptor role is filled by glutamate 117.

Belongs to the phosphoglycerate mutase family. BPG-dependent PGAM subfamily.

It catalyses the reaction (2R)-2-phosphoglycerate = (2R)-3-phosphoglycerate. The protein operates within carbohydrate degradation; glycolysis; pyruvate from D-glyceraldehyde 3-phosphate: step 3/5. Its function is as follows. Catalyzes the interconversion of 2-phosphoglycerate and 3-phosphoglycerate. This chain is 2,3-bisphosphoglycerate-dependent phosphoglycerate mutase, found in Methanosarcina mazei (strain ATCC BAA-159 / DSM 3647 / Goe1 / Go1 / JCM 11833 / OCM 88) (Methanosarcina frisia).